The sequence spans 332 residues: Probable electron transfer flavoprotein subunit alpha, mitochondrial (332 aa).

FAD is bound at residue 275–303; the sequence is LYIAIGISGAIQHLAGMKDSKVIVAINKD.

The protein belongs to the ETF alpha-subunit/FixB family. In terms of assembly, heterodimer of an alpha and a beta subunit. It depends on FAD as a cofactor.

Its subcellular location is the mitochondrion matrix. Its function is as follows. The electron transfer flavoprotein serves as a specific electron acceptor for several dehydrogenases, including five acyl-CoA dehydrogenases, glutaryl-CoA and sarcosine dehydrogenase. It transfers the electrons to the main mitochondrial respiratory chain via ETF-ubiquinone oxidoreductase (ETF dehydrogenase). This chain is Probable electron transfer flavoprotein subunit alpha, mitochondrial, found in Caenorhabditis elegans.